A 154-amino-acid chain; its full sequence is Ribosome maturation factor RimP (154 aa).

The protein belongs to the RimP family.

It localises to the cytoplasm. Required for maturation of 30S ribosomal subunits. The protein is Ribosome maturation factor RimP of Haemophilus ducreyi (strain 35000HP / ATCC 700724).